The primary structure comprises 890 residues: DNA mismatch repair protein MutS (890 aa).

ATP is bound at residue 645 to 652 (GPNMAGKS).

This sequence belongs to the DNA mismatch repair MutS family.

Its function is as follows. This protein is involved in the repair of mismatches in DNA. It is possible that it carries out the mismatch recognition step. This protein has a weak ATPase activity. The protein is DNA mismatch repair protein MutS of Rickettsia rickettsii (strain Iowa).